Consider the following 346-residue polypeptide: Phosphoribosylformylglycinamidine cyclo-ligase (346 aa).

This sequence belongs to the AIR synthase family.

The protein localises to the cytoplasm. The enzyme catalyses 2-formamido-N(1)-(5-O-phospho-beta-D-ribosyl)acetamidine + ATP = 5-amino-1-(5-phospho-beta-D-ribosyl)imidazole + ADP + phosphate + H(+). The protein operates within purine metabolism; IMP biosynthesis via de novo pathway; 5-amino-1-(5-phospho-D-ribosyl)imidazole from N(2)-formyl-N(1)-(5-phospho-D-ribosyl)glycinamide: step 2/2. The protein is Phosphoribosylformylglycinamidine cyclo-ligase of Bacillus cereus (strain B4264).